The chain runs to 379 residues: Putative zinc metalloprotease sll0528 (379 aa).

2 helical membrane-spanning segments follow: residues 20–40 (LFGI…LVTL) and 54–74 (GGTP…SVVA). Residue His75 participates in Zn(2+) binding. Glu76 is an active-site residue. Zn(2+) is bound at residue His79. 3 helical membrane passes run 115–135 (FAVA…LTIV), 148–168 (IIGL…IPGL), and 212–232 (GILN…WFLL). CBS domains lie at 257–315 (VIPN…DWPQ) and 322–379 (MQYP…TSAA).

Belongs to the peptidase M50B family. It depends on Zn(2+) as a cofactor.

The protein localises to the cell membrane. The protein is Putative zinc metalloprotease sll0528 of Synechocystis sp. (strain ATCC 27184 / PCC 6803 / Kazusa).